We begin with the raw amino-acid sequence, 844 residues long: Protein translocase subunit SecA 1 (844 aa).

Residues glutamine 91, 109–113 (GEGKT), and aspartate 498 contribute to the ATP site. The segment covering 793 to 813 (KSKSFGEAKHVTAEDGKEKAK) has biased composition (basic and acidic residues). Residues 793-825 (KSKSFGEAKHVTAEDGKEKAKPQPIVKGDQVGR) form a disordered region. Residues cysteine 829, cysteine 831, cysteine 840, and histidine 841 each coordinate Zn(2+).

Belongs to the SecA family. In terms of assembly, monomer and homodimer. Part of the essential Sec protein translocation apparatus which comprises SecA, SecYEG and auxiliary proteins SecDF. Other proteins may also be involved. The cofactor is Zn(2+).

It is found in the cell membrane. The protein localises to the cytoplasm. It catalyses the reaction ATP + H2O + cellular proteinSide 1 = ADP + phosphate + cellular proteinSide 2.. Its function is as follows. Part of the Sec protein translocase complex. Interacts with the SecYEG preprotein conducting channel. Has a central role in coupling the hydrolysis of ATP to the transfer of proteins into and across the cell membrane, serving as an ATP-driven molecular motor driving the stepwise translocation of polypeptide chains across the membrane. The sequence is that of Protein translocase subunit SecA 1 from Staphylococcus epidermidis (strain ATCC 35984 / DSM 28319 / BCRC 17069 / CCUG 31568 / BM 3577 / RP62A).